The chain runs to 388 residues: MAFQLTPLRVALVAGEPSGDLLGASLLGGLHARLPASSRYYGIGGPRMSAVEFDAHWPMEKLAVRGYVEALKHIPEILRIRGELKRQLLAEPPDAFVGIDAPDFNFGLEQALRGAGIPTIHFVCPSIWAWRGGRIKKIVKAVDHMLCLFPFEPELLEKAGVAATFVGHPLADEIPLEPDTHGARIALGLPDGGPVIAVLPGSRRSEIELIGPTFFDAMELMQQREPGVRFVVPAATPVLRALLQPLVDAHPSLSVTLTEGRAQVAMTAADAILVKSGTVTLEAALLKKPMVISYKVPWLTGQIMRRQGYLPYVGLPNILAGRFVVPELLQHFATPDALADATLTQLRDDANRRALTDIFTDMHLALRQNTAQRAAEAVARVIDSRKPR.

Belongs to the LpxB family.

It catalyses the reaction a lipid X + a UDP-2-N,3-O-bis[(3R)-3-hydroxyacyl]-alpha-D-glucosamine = a lipid A disaccharide + UDP + H(+). It functions in the pathway bacterial outer membrane biogenesis; LPS lipid A biosynthesis. Its function is as follows. Condensation of UDP-2,3-diacylglucosamine and 2,3-diacylglucosamine-1-phosphate to form lipid A disaccharide, a precursor of lipid A, a phosphorylated glycolipid that anchors the lipopolysaccharide to the outer membrane of the cell. This chain is Lipid-A-disaccharide synthase, found in Burkholderia pseudomallei (strain K96243).